The primary structure comprises 332 residues: Glycerol-3-phosphate dehydrogenase [NAD(P)+] (332 aa).

NADPH contacts are provided by Ser11, Phe12, Arg32, and Lys106. 3 residues coordinate sn-glycerol 3-phosphate: Lys106, Gly134, and Ser136. Residue Ala138 coordinates NADPH. Lys189, Asp242, Ser252, Arg253, and Asn254 together coordinate sn-glycerol 3-phosphate. Lys189 functions as the Proton acceptor in the catalytic mechanism. Position 253 (Arg253) interacts with NADPH. Residues Val277 and Glu279 each contribute to the NADPH site.

The protein belongs to the NAD-dependent glycerol-3-phosphate dehydrogenase family.

Its subcellular location is the cytoplasm. The catalysed reaction is sn-glycerol 3-phosphate + NAD(+) = dihydroxyacetone phosphate + NADH + H(+). The enzyme catalyses sn-glycerol 3-phosphate + NADP(+) = dihydroxyacetone phosphate + NADPH + H(+). It participates in membrane lipid metabolism; glycerophospholipid metabolism. Its function is as follows. Catalyzes the reduction of the glycolytic intermediate dihydroxyacetone phosphate (DHAP) to sn-glycerol 3-phosphate (G3P), the key precursor for phospholipid synthesis. The chain is Glycerol-3-phosphate dehydrogenase [NAD(P)+] from Clostridium acetobutylicum (strain ATCC 824 / DSM 792 / JCM 1419 / IAM 19013 / LMG 5710 / NBRC 13948 / NRRL B-527 / VKM B-1787 / 2291 / W).